The sequence spans 454 residues: MTVIIASHWGPQSKQMLPPEPPRIILREVPVQNNQKEHPPVQEIKTVSSKSKEHRVSSSRKIPDHFDVGPRFYMNVPADGSEVFEDDEKDVENECWAVIERIGSEDDKFEASELVEYRDHDWYIALAINKEKTPDKANYQHLLYSYRGGIQRIILTPQQTDSIDKTPLVKYKIIGDGLYEVLPIHSSLPQTGLISPKYRYNKGVELRIFGIVNWIDFVLDDDHQTHRTMVWTDAVGPIYLSAADRANIRRKLLLTEMQIFAPLRMCHITVKAEFNFSIPDGSPIQWTISSFQPLIEESEKDPNIGRNLWPARVLRFDDLVVTKKTPNGYWLKSQRLEGHVNVFAGANQIGIIESAGEKYATKGSMMAFVVPCYQNSTFAYFEALIAGPPRVVMIITEGRFLNYCPKTWPPSVRKMRDQYQKEHVLKSEVRSSPICMKQPDYCLKSLRGFSECPF.

Residues 31–61 (VQNNQKEHPPVQEIKTVSSKSKEHRVSSSRK) are disordered. The segment covering 50–61 (KSKEHRVSSSRK) has biased composition (basic and acidic residues).

As to quaternary structure, may interact with pid-4, pid-5, app-1 and prmt-5. In terms of tissue distribution, expressed throughout the mitotic and meiotic regions of the germline and in oocytes.

The protein resides in the cytoplasm. Its subcellular location is the perinuclear region. It is found in the cytoplasmic granule. In terms of biological role, involved in gene silencing mediated by a class of 21 nucleotide PIWI-interacting RNAs (piRNAs) that possess a uracil residue at the 5'-end (also called 21U-RNAs) and that guide the Piwi protein prg-1 to its DNA targets for silencing. Not required for the biogenesis of 21U-RNAs. May also be involved in gene silencing mediated by 22G-siRNAs (a class of 22 nucleotide endogenous small interfering RNAs (siRNAs) that possess a triphosphorylated guanine residue at the 5'-end) and 26G-siRNAs (a class of 26 nucleotide siRNAs that possess a guanine residue at the 5'-end). Required for the biogenesis of secondary and tertiary 22G-siRNAs from many loci. Specifically, promotes the production of 22G-siRNAs from the 5' end of target mRNAs. May play a role in the production of 26G-siRNAs. Plays a role in small RNA-directed transgenerational epigenetic inheritance (also called RNAe) over several generations and germline immortality. Together with the argonaut protein hrde-1, promotes the silencing of the DNA transposable element Tc1. Required for the formation of liquid-like condensates in the cytoplasm called Z granules, playing a role in maintaining their assembly, viscosity and morphology in adult germ cells, and localization in early embryos. This Caenorhabditis elegans protein is Protein pid-2.